The sequence spans 727 residues: MQQKTKLFLQALKYSIPHLGKCMQKQHLNHYNFADHYYNRIKLKKYHLTKCLQNKPKISELARNIPSRSFSCKDLQPVKQENEKPLPENMDAFEKVRTKLETQPQEEYEIINVEVKHGGFVYYQEGCCLVRSKDEEADNDNYEVLFNLEELKLDQPFIDCIRVAPDEKYVAAKIRTEDSEASTCVIIKLSDQPVMEASFPNVSSFEWVKDEEDEDVLFYTFQRNLRCHDVYRATFGDNKRNERFYTEKDPSYFVFLYLTKDSRFLTINIMNKTTSEVWLIDGLSPWDPPVLIQKRIHGVLYYVEHRDDELYILTNVGEPTEFKLMRTAADTPAIMNWDLFFTMKRNTKVIDLDMFKDHCVLFLKHSNLLYVNVIGLADDSVRSLKLPPWACGFIMDTNSDPKNCPFQLCSPIRPPKYYTYKFAEGKLFEETGHEDPITKTSRVLRLEAKSKDGKLVPMTVFHKTDSEDLQKKPLLVQVYGAYGIDLKMNFRPERRVLVDDGWILAYCHVRGGGELGLQWHADGRLTKKLNGLADLEACIKTLHGQGFSQPSLTTLTAFSAGGVLAGALCNSNPELLRAVTLEAPFLDVLNTMMDTTLPLTLEELEEWGNPSSDEKHKNYIKHYCPYQNIKPQHYPSIHITAYENDERVPLKGIVSYTEKLKEAIAEHAKDTGEGYQSPNIILDIQPGGNHVIEDSHKKITAQIKFLYEELGLDSTSVFEDLKKYLKF.

Active-site charge relay system residues include Ser559, Asp645, and His690.

Belongs to the peptidase S9A family. Homodimer. Interacts with the AP-1 complex.

It localises to the cytoplasm. The protein resides in the cytosol. Its subcellular location is the golgi apparatus. The protein localises to the trans-Golgi network. It is found in the cytoskeleton. It localises to the nucleus. Its function is as follows. Serine peptidase whose precise substrate specificity remains unclear. Does not cleave peptides after a arginine or lysine residue. Regulates trans-Golgi network morphology and sorting by regulating the membrane binding of the AP-1 complex. May play a role in the regulation of synaptic vesicle exocytosis. This Pongo abelii (Sumatran orangutan) protein is Prolyl endopeptidase-like (PREPL).